The chain runs to 231 residues: MAEEKELVLLDFWVSPFGQRCRIAMAEKGLEFEYREEDLGNKSDLLLRSNPVHRKIPVLLHAGRPVSESLVILQYLDDAFPGTPHLLSPANSGDADAAYARATARFWADYVDRKLYDCGSRLWRLKGEPQAAAGREMAEILRTLEAELGDREFFGGGGGGRLGFVDVALVPFTAWFYSYERCGGFSVEEVAPRLAAWARRCGRIDSVAKHLPSPEKVYDFVGVLKKKYGVE.

The 80-residue stretch at 5-84 (KELVLLDFWV…YLDDAFPGTP (80 aa)) folds into the GST N-terminal domain. Glutathione-binding positions include Ser15, Lys42, Ile56, and 68 to 69 (ES). Residues 97 to 220 (AAYARATARF…LPSPEKVYDF (124 aa)) form the GST C-terminal domain.

This sequence belongs to the GST superfamily. Tau family.

It carries out the reaction RX + glutathione = an S-substituted glutathione + a halide anion + H(+). In terms of biological role, conjugation of reduced glutathione to a wide number of exogenous and endogenous hydrophobic electrophiles. This chain is Probable glutathione S-transferase GSTU1 (GSTU1), found in Oryza sativa subsp. indica (Rice).